A 266-amino-acid polypeptide reads, in one-letter code: MNKQFYSQQWKGVLTGFRPLTMVSPRFSMFLVPRRISCRFVHSTPKKDHTTLLSNDKLATFNVMSLKALKNECRTRGLKISGRKGELVDRILAFETSGSLSGGAAKQAARQLHISKSIRARNDIKPVDDVRMPDIAATEKSLETPEQEYIVHITPLSSSADKKPVTRLEKELSVEEVSANVPPAVSTTDHDKVIFQVDAPTDNIEVVDEEAELDADKRASENFGLHATKEELNSRDKTFLFGFAAALVGWWSLKFWDNKGKKRSLT.

Residues 1 to 40 (MNKQFYSQQWKGVLTGFRPLTMVSPRFSMFLVPRRISCRF) constitute a mitochondrion transit peptide. The SAP domain occupies 61–95 (FNVMSLKALKNECRTRGLKISGRKGELVDRILAFE). The chain crosses the membrane as a helical span at residues 238-256 (TFLFGFAAALVGWWSLKFW).

This sequence belongs to the AIM34 family.

It localises to the mitochondrion membrane. The protein is Altered inheritance of mitochondria protein 34, mitochondrial (AIM34) of Lachancea thermotolerans (strain ATCC 56472 / CBS 6340 / NRRL Y-8284) (Yeast).